The chain runs to 375 residues: D-alanine--D-alanine ligase (375 aa).

The ATP-grasp domain maps to 145–348; sequence KRLLRDADLE…YPALITRLIE (204 aa). 175-230 serves as a coordination point for ATP; it reads ITYLGSSLFVKPANQGSSVGVSKVINRISFDQALALAFCFDDKVLVESAINGRELE. Residues D302, E315, and N317 each coordinate Mg(2+).

Belongs to the D-alanine--D-alanine ligase family. Mg(2+) is required as a cofactor. Mn(2+) serves as cofactor.

The protein resides in the cytoplasm. It catalyses the reaction 2 D-alanine + ATP = D-alanyl-D-alanine + ADP + phosphate + H(+). It functions in the pathway cell wall biogenesis; peptidoglycan biosynthesis. Cell wall formation. The protein is D-alanine--D-alanine ligase of Baumannia cicadellinicola subsp. Homalodisca coagulata.